Reading from the N-terminus, the 33-residue chain is Brevinin-2HSa (33 aa).

A disulfide bridge connects residues Cys-27 and Cys-33.

As to expression, expressed by the skin glands.

Its subcellular location is the secreted. Functionally, has antibacterial activity against the Gram-positive bacterium S.aureus ATCC 25923 (MIC=18 uM) and the Gram-negative bacterium E.coli ATCC 25726 (MIC=36 uM). In Odorrana hosii (Hose's rock frog), this protein is Brevinin-2HSa.